The sequence spans 956 residues: Ubiquitin carboxyl-terminal hydrolase CYLD (956 aa).

Residues 106-593 are interaction with TRIP; the sequence is CEERFSLFKN…LEIMIGKKKG (488 aa). 2 consecutive CAP-Gly domains span residues 153 to 198 and 253 to 286; these read LAER…VFVA and DVLPGKESLGYFVGVDMDNPIGNWDGRFDGVQLC. The interval 309-353 is disordered; the sequence is SVTQERRPPKLAFMSRGVGDKGSSSHNKPKATGSTSDPGNRNRSE. Positions 330 to 349 are enriched in polar residues; sequence GSSSHNKPKATGSTSDPGNR. Residue Ser-387 is modified to Phosphoserine. The disordered stretch occupies residues 392–411; the sequence is STDFDRSSPPLQPPPVNSLT. The tract at residues 394-469 is interaction with TRAF2; it reads DFDRSSPPLQ…LAMPPGNSHG (76 aa). Phosphoserine occurs at positions 418 and 422. The tract at residues 470–554 is interaction with IKBKG/NEMO; sequence LEVGSLAEVK…FASLQPVSNQ (85 aa). One can recognise a CAP-Gly 3 domain in the interval 492–535; that stretch reads GQPPGLNEVLAGLELEDECAGCTDGTFRGTRYFTCALKKALFVK. A USP domain is found at 592–950; the sequence is KGIQGHYNSC…DAYMCMYQSP (359 aa). Cys-601 acts as the Nucleophile in catalysis. A B-box region spans residues 781–833; it reads LEDTPRQCRICGGLAMYECRECYDDPDISAGKIKQFCKTCNTQVHLHPKRLNH. 8 residues coordinate Zn(2+): Cys-788, Cys-791, Cys-799, Cys-802, Cys-817, Cys-820, His-825, and His-833. His-871 serves as the catalytic Proton acceptor.

The protein belongs to the peptidase C19 family. Interacts (via CAP-Gly domain) with IKBKG/NEMO (via proline-rich C-terminal region). Interacts with TRAF2 and TRIP. Interacts with PLK1, DVL1, DVL3, MAVS, TBK1, IKKE and RIGI. Interacts (via CAP-Gly domain) with microtubules. Interacts with HDAC6 and BCL3. Interacts with MAP3K7. Identified in a complex with TRAF6 and SQSTM1. Interacts with OPTN and SQSTM1. Interacts with CEP350. Interacts with RNF31; the interaction is indirect and is mediated via SPATA2. Interacts with SPATA2 (via the PUB domain); the interaction is direct and recruits CYLD to the LUBAC complex, thereby regulating TNF-alpha-induced necroptosis. In terms of processing, ubiquitinated. Polyubiquitinated in hepatocytes treated with palmitic acid. Ubiquitination is mediated by E3 ligase TRIM47 and leads to proteasomal degradation. Post-translationally, phosphorylated on several serine residues by IKKA and/or IKKB in response to immune stimuli. Phosphorylation requires IKBKG. Phosphorylation abolishes TRAF2 deubiquitination, interferes with the activation of Jun kinases, and strongly reduces CD40-dependent gene activation by NF-kappa-B. As to expression, detected in fetal brain, testis, and skeletal muscle, and at a lower level in adult brain, leukocytes, liver, heart, kidney, spleen, ovary and lung. Isoform 2 is found in all tissues except kidney.

The protein localises to the cytoplasm. Its subcellular location is the perinuclear region. It is found in the cytoskeleton. The protein resides in the cell membrane. It localises to the microtubule organizing center. The protein localises to the centrosome. Its subcellular location is the spindle. It is found in the cilium basal body. The enzyme catalyses Thiol-dependent hydrolysis of ester, thioester, amide, peptide and isopeptide bonds formed by the C-terminal Gly of ubiquitin (a 76-residue protein attached to proteins as an intracellular targeting signal).. Its activity is regulated as follows. Inhibited by phosphorylation at serine residues. Functionally, deubiquitinase that specifically cleaves 'Lys-63'- and linear 'Met-1'-linked polyubiquitin chains and is involved in NF-kappa-B activation and TNF-alpha-induced necroptosis. Negatively regulates NF-kappa-B activation by deubiquitinating upstream signaling factors. Contributes to the regulation of cell survival, proliferation and differentiation via its effects on NF-kappa-B activation. Negative regulator of Wnt signaling. Inhibits HDAC6 and thereby promotes acetylation of alpha-tubulin and stabilization of microtubules. Plays a role in the regulation of microtubule dynamics, and thereby contributes to the regulation of cell proliferation, cell polarization, cell migration, and angiogenesis. Required for normal cell cycle progress and normal cytokinesis. Inhibits nuclear translocation of NF-kappa-B. Plays a role in the regulation of inflammation and the innate immune response, via its effects on NF-kappa-B activation. Dispensable for the maturation of intrathymic natural killer cells, but required for the continued survival of immature natural killer cells. Negatively regulates TNFRSF11A signaling and osteoclastogenesis. Involved in the regulation of ciliogenesis, allowing ciliary basal bodies to migrate and dock to the plasma membrane; this process does not depend on NF-kappa-B activation. Ability to remove linear ('Met-1'-linked) polyubiquitin chains regulates innate immunity and TNF-alpha-induced necroptosis: recruited to the LUBAC complex via interaction with SPATA2 and restricts linear polyubiquitin formation on target proteins. Regulates innate immunity by restricting linear polyubiquitin formation on RIPK2 in response to NOD2 stimulation. Involved in TNF-alpha-induced necroptosis by removing linear ('Met-1'-linked) polyubiquitin chains from RIPK1, thereby regulating the kinase activity of RIPK1. Negatively regulates intestinal inflammation by removing 'Lys-63' linked polyubiquitin chain of NLRP6, thereby reducing the interaction between NLRP6 and PYCARD/ASC and formation of the NLRP6 inflammasome. Does not catalyze deubiquitination of heterotypic 'Lys-63'-/'Lys-48'-linked branched ubiquitin chains. Removes 'Lys-63' linked polyubiquitin chain of MAP3K7, which inhibits phosphorylation and blocks downstream activation of the JNK-p38 kinase cascades. Also removes 'Lys-63'-linked polyubiquitin chains of MAP3K1 and MA3P3K3, which inhibit their interaction with MAP2K1 and MAP2K2. The sequence is that of Ubiquitin carboxyl-terminal hydrolase CYLD from Homo sapiens (Human).